We begin with the raw amino-acid sequence, 530 residues long: PC4 and SFRS1-interacting protein (530 aa).

The PWWP domain occupies 1-64 (MTRDFKPGDL…PKDIFPYSEN (64 aa)). Residue Lys-75 forms a Glycyl lysine isopeptide (Lys-Gly) (interchain with G-Cter in SUMO2) linkage. Residues 86–349 (NNPKVKFSSQ…VEKKRETSMD (264 aa)) form a disordered region. Residues 92-104 (FSSQQASTKQSNA) show a composition bias toward polar residues. Ser-102, Ser-105, and Ser-106 each carry phosphoserine. Residues 113–135 (KETSVSKEDTDHEEKASNEDVTK) show a composition bias toward basic and acidic residues. Residues Thr-115 and Thr-122 each carry the phosphothreonine modification. Ser-129 carries the phosphoserine modification. Thr-141 is subject to Phosphothreonine. The span at 144–153 (AARRGRKRKA) shows a compositional bias: basic residues. The short motif at 146–156 (RRGRKRKAEKQ) is the Nuclear localization signal element. The residue at position 167 (Thr-167) is a Phosphothreonine. Ser-177 and Ser-206 each carry phosphoserine. Positions 213–261 (EEDKSKKKGQEEKQPKKQLKKDEEGQKEEDKPRKEPDKKEGKKEVESKR) are enriched in basic and acidic residues. Phosphoserine is present on Ser-271. A Phosphothreonine modification is found at Thr-272. Phosphoserine is present on residues Ser-273 and Ser-275. Acidic residues predominate over residues 274-283 (DSEEEGDDQE). The segment covering 287-302 (KRKGGRNFQTAHRRNM) has biased composition (basic residues). Over residues 305-349 (GQHEKEAADRKRKQEEQMETEQQNKDEGKKPEVKKVEKKRETSMD) the composition is skewed to basic and acidic residues. 2 coiled-coil regions span residues 306–334 (QHEKEAADRKRKQEEQMETEQQNKDEGKK) and 371–395 (NRCIEALDELASLQVTMQQAQKHTE). Positions 340–417 (VEKKRETSMD…VSQIIMEKST (78 aa)) are integrase-binding domain (IBD). The residue at position 434 (Ser-434) is a Phosphoserine. The residue at position 437 (Thr-437) is a Phosphothreonine. The residue at position 443 (Ser-443) is a Phosphoserine. Over residues 446 to 473 (EQRQHEEANKTKDQGKKGPNKKLDKEQT) the composition is skewed to basic and acidic residues. The disordered stretch occupies residues 446 to 530 (EQRQHEEANK…ISLKDSTLDN (85 aa)). Over residues 474–494 (GSKTLNGGSDAPDSNQAQHNG) the composition is skewed to polar residues. Residues 498–530 (EESKDKHEASSKKKPSNEERETEISLKDSTLDN) are compositionally biased toward basic and acidic residues. Residue Arg-517 is modified to Citrulline. At Ser-522 the chain carries Phosphoserine. A Phosphothreonine modification is found at Thr-527.

The protein belongs to the HDGF family. As to quaternary structure, monomer. Interacts with IFRD1/PC4. Interacts (via IBD domain) with POGZ (via IBM motif) and CDCA7L (via IBM motifs). Interacts (via IBD domain) with KMT2A (via IBM motifs) with a moderate affinity whereas interacts with the KMT2A-MEN1 complex with a greater affinity; MEN1 enhances interaction of KMT2A with PSIP1. Interacts (via IBD domain) with IWS1 (via IBM motif), MED1 (via IBM motif) and DBF4 (via IBM motifs). (Microbial infection) Interacts (via IBD domain) with feline immunodeficiency virus (FIV) integrase (IN), determining its nuclear localization, its tight association with chromatin and its protection from the proteasome. Post-translationally, citrullinated by PADI4.

Its subcellular location is the nucleus. Its function is as follows. Transcriptional coactivator involved in neuroepithelial stem cell differentiation and neurogenesis. Involved in particular in lens epithelial cell gene regulation and stress responses. May play an important role in lens epithelial to fiber cell terminal differentiation. May play a protective role during stress-induced apoptosis. This is PC4 and SFRS1-interacting protein (PSIP1) from Felis catus (Cat).